We begin with the raw amino-acid sequence, 450 residues long: Chromosomal replication initiator protein DnaA (450 aa).

The tract at residues 1–73 (MNTKELWIEV…KNILKKLTGI (73 aa)) is domain I, interacts with DnaA modulators. The segment at 73–104 (IQYNISFELEKNINKQASVISKIDTLTENNNL) is domain II. The tract at residues 105-326 (AYYENYTFEN…GAIKRLLFLA (222 aa)) is domain III, AAA+ region. Residues Gly-149, Gly-151, Lys-152, and Thr-153 each contribute to the ATP site. The segment at 327–450 (VMNKKPNEII…NAIRRKIEGR (124 aa)) is domain IV, binds dsDNA.

This sequence belongs to the DnaA family. In terms of assembly, oligomerizes as a right-handed, spiral filament on DNA at oriC.

It localises to the cytoplasm. Plays an essential role in the initiation and regulation of chromosomal replication. ATP-DnaA binds to the origin of replication (oriC) to initiate formation of the DNA replication initiation complex once per cell cycle. Binds the DnaA box (a 9 base pair repeat at the origin) and separates the double-stranded (ds)DNA. Forms a right-handed helical filament on oriC DNA; dsDNA binds to the exterior of the filament while single-stranded (ss)DNA is stabiized in the filament's interior. The ATP-DnaA-oriC complex binds and stabilizes one strand of the AT-rich DNA unwinding element (DUE), permitting loading of DNA polymerase. After initiation quickly degrades to an ADP-DnaA complex that is not apt for DNA replication. Binds acidic phospholipids. In Spiroplasma citri, this protein is Chromosomal replication initiator protein DnaA.